The sequence spans 178 residues: Inner membrane-spanning protein YciB (178 aa).

5 helical membrane-spanning segments follow: residues 22–42 (IFVA…VSWL), 50–70 (MALF…ALHN), 76–96 (WKVT…HWFM), 121–141 (IAWA…AFWL), and 149–169 (FKVF…GIYI).

Belongs to the YciB family.

It is found in the cell inner membrane. Plays a role in cell envelope biogenesis, maintenance of cell envelope integrity and membrane homeostasis. This chain is Inner membrane-spanning protein YciB, found in Erwinia tasmaniensis (strain DSM 17950 / CFBP 7177 / CIP 109463 / NCPPB 4357 / Et1/99).